The primary structure comprises 378 residues: Quinolinate synthase (378 aa).

The iminosuccinate site is built by histidine 59 and serine 80. Cysteine 125 provides a ligand contact to [4Fe-4S] cluster. Residues 151-153 (YAN) and serine 168 each bind iminosuccinate. Cysteine 212 provides a ligand contact to [4Fe-4S] cluster. Iminosuccinate contacts are provided by residues 238 to 240 (HPE) and threonine 255. Cysteine 309 is a binding site for [4Fe-4S] cluster.

It belongs to the quinolinate synthase family. Type 1 subfamily. It depends on [4Fe-4S] cluster as a cofactor.

It is found in the cytoplasm. The catalysed reaction is iminosuccinate + dihydroxyacetone phosphate = quinolinate + phosphate + 2 H2O + H(+). The protein operates within cofactor biosynthesis; NAD(+) biosynthesis; quinolinate from iminoaspartate: step 1/1. Catalyzes the condensation of iminoaspartate with dihydroxyacetone phosphate to form quinolinate. The protein is Quinolinate synthase of Burkholderia lata (strain ATCC 17760 / DSM 23089 / LMG 22485 / NCIMB 9086 / R18194 / 383).